A 286-amino-acid chain; its full sequence is MNIMIALIPALLWGTVPLIITKFGGSTRQQTMGMTLGALTFAVIVFFFTDPVYTLKTVGISFITGCLWTVGQMFQLRAFKIIGVSKAMPISTGMQLVGTTLCGVILFHEWDTTLRIILGFIALALIVGGIFLTSYAEKEEDGTNALKQGLITLVISSLGYVGLVVLIQGFKIDGINAILPQAIGMVLSALIMTHSGGTEKRFNKRTLLLIIPGMIWAAGNVAMVHANQLVGVATGFSLSQLGVVISTIGGIVLLKEKKTQKEMLYVIVGVVLVVLGGILIGVAKGA.

8 consecutive transmembrane segments (helical) span residues 4–26, 33–55, 114–136, 149–167, 177–194, 207–226, 230–252, and 264–283; these read MIAL…FGGS, GMTL…VYTL, LRII…TSYA, GLIT…VVLI, AILP…IMTH, LLLI…MVHA, VGVA…GGIV, and LYVI…IGVA.

This sequence belongs to the GRP transporter (TC 2.A.7.5) family.

Its subcellular location is the cell membrane. In Listeria innocua serovar 6a (strain ATCC BAA-680 / CLIP 11262), this protein is Putative sugar uptake protein lin0215.